We begin with the raw amino-acid sequence, 236 residues long: Purine nucleoside phosphorylase DeoD-type (236 aa).

His-5 is a binding site for a purine D-ribonucleoside. Residues Gly-21, Arg-25, Arg-44, and 88–91 (RVGS) contribute to the phosphate site. A purine D-ribonucleoside-binding positions include 180-182 (DME) and 204-205 (SD). Asp-205 serves as the catalytic Proton donor.

Belongs to the PNP/UDP phosphorylase family. As to quaternary structure, homohexamer; trimer of homodimers.

The enzyme catalyses a purine D-ribonucleoside + phosphate = a purine nucleobase + alpha-D-ribose 1-phosphate. It carries out the reaction a purine 2'-deoxy-D-ribonucleoside + phosphate = a purine nucleobase + 2-deoxy-alpha-D-ribose 1-phosphate. Its function is as follows. Catalyzes the reversible phosphorolytic breakdown of the N-glycosidic bond in the beta-(deoxy)ribonucleoside molecules, with the formation of the corresponding free purine bases and pentose-1-phosphate. This chain is Purine nucleoside phosphorylase DeoD-type, found in Aliivibrio salmonicida (strain LFI1238) (Vibrio salmonicida (strain LFI1238)).